Reading from the N-terminus, the 82-residue chain is Mitotic-spindle organizing protein 1 (82 aa).

Alanine 2 bears the N-acetylalanine mark.

Belongs to the MOZART1 family. As to quaternary structure, associates with the gamma-tubulin ring complex (gTuRC) consisting of TUBGCP2, TUBGCP3, TUBGCP4, TUBGCP5 and TUBGCP6 and gamma-tubulin TUBG1 or TUBG2; within the complex, interacts with TUBGCP3 and TUBGCP6 to form a luminal bridge with actin that stabilizes the initial structure during complex assembly. Interacts with TUBG1.

It is found in the cytoplasm. It localises to the cytoskeleton. The protein resides in the microtubule organizing center. The protein localises to the centrosome. Its subcellular location is the spindle. Functionally, required for the recruitment and the assembly of the gamma-tubulin ring complex (gTuRC) at the centrosome. The gTuRC regulates the minus-end nucleation of alpha-beta tubulin heterodimers that grow into microtubule protafilaments, a critical step in centrosome duplication and spindle formation. The protein is Mitotic-spindle organizing protein 1 (MZT1) of Homo sapiens (Human).